Reading from the N-terminus, the 226-residue chain is GTP-binding nuclear protein Ran-3 (226 aa).

The region spanning 14–178 (GYPSFKLILV…LYLARKLTGD (165 aa)) is the Small GTPase Ran-type domain. 25-32 (DGGTGKTT) is a binding site for GTP. Residues 44-52 (KRYEPTIGV) are switch-I. GTP contacts are provided by residues glycine 75, 129–132 (NKVD), and 157–159 (SAK). The segment at 75–91 (GQEKFGGLRDGYYIHGH) is switch-II.

Belongs to the small GTPase superfamily. Ran family. As to quaternary structure, found in a nuclear export complex with RanGTP, exportin and pre-miRNA.

The protein resides in the nucleus. Its function is as follows. GTP-binding protein involved in nucleocytoplasmic transport. Required for the import of protein into the nucleus and also for RNA export. Involved in chromatin condensation and control of cell cycle. In Oryza sativa subsp. indica (Rice), this protein is GTP-binding nuclear protein Ran-3 (RAN3).